We begin with the raw amino-acid sequence, 424 residues long: UPF0415 protein C7orf25 homolog (424 aa).

Belongs to the UPF0415 family.

This chain is UPF0415 protein C7orf25 homolog, found in Xenopus laevis (African clawed frog).